Here is a 562-residue protein sequence, read N- to C-terminus: Chaperonin GroEL 1 (562 aa).

ATP is bound by residues 30-33, Lys-51, 87-91, Gly-415, 478-480, and Asp-494; these read TLGP, DGTTT, and NAA.

Belongs to the chaperonin (HSP60) family. As to quaternary structure, forms a cylinder of 14 subunits composed of two heptameric rings stacked back-to-back. Interacts with the co-chaperonin GroES.

Its subcellular location is the cytoplasm. The enzyme catalyses ATP + H2O + a folded polypeptide = ADP + phosphate + an unfolded polypeptide.. In terms of biological role, together with its co-chaperonin GroES, plays an essential role in assisting protein folding. The GroEL-GroES system forms a nano-cage that allows encapsulation of the non-native substrate proteins and provides a physical environment optimized to promote and accelerate protein folding. This is Chaperonin GroEL 1 from Sorangium cellulosum (strain So ce56) (Polyangium cellulosum (strain So ce56)).